Here is a 271-residue protein sequence, read N- to C-terminus: Methylcorrinoid:tetrahydrofolate methyltransferase (271 aa).

Residues 1–247 (MIIIGEKLNG…GAIFATDALL (247 aa)) form the Pterin-binding domain.

It belongs to the vitamin-B12 dependent methionine synthase family. In terms of assembly, the proline betaine:THF methyl transfer system is composed of two methyltransferases, MtpB and MtqA, and the corrinoid protein MtqC. The L-carnitine:THF methyl transfer system is composed of two methyltransferases, MtcB and MtqA, and the corrinoid protein MtqC.

The catalysed reaction is methyl-Co(III)-[quaternary-amine-specific corrinoid protein] + (6S)-5,6,7,8-tetrahydrofolate = Co(I)-[quaternary-amine-specific corrinoid protein] + (6S)-5-methyl-5,6,7,8-tetrahydrofolate + H(+). Functionally, involved in the degradation of the quaternary amines L-proline betaine and L-carnitine. Component of a corrinoid-dependent methyltransferase system that transfers a methyl group from L-proline betaine or L-carnitine to tetrahydrofolate (THF), forming methyl-THF, a key intermediate in the Wood-Ljungdahl acetogenesis pathway. MtqA catalyzes the transfer of a methyl group from the methylated corrinoid protein MtqC to THF, forming methyl-THF. This chain is Methylcorrinoid:tetrahydrofolate methyltransferase, found in Eubacterium limosum.